Consider the following 563-residue polypeptide: Arginine--tRNA ligase (563 aa).

The 'HIGH' region signature appears at 137–147; that stretch reads ANPTGLLHMGN.

It belongs to the class-I aminoacyl-tRNA synthetase family. Monomer.

Its subcellular location is the cytoplasm. It catalyses the reaction tRNA(Arg) + L-arginine + ATP = L-arginyl-tRNA(Arg) + AMP + diphosphate. This Desulforudis audaxviator (strain MP104C) protein is Arginine--tRNA ligase.